The primary structure comprises 371 residues: Cytochrome b (371 aa).

4 consecutive transmembrane segments (helical) span residues 25 to 45 (FGSM…FLAV), 69 to 90 (WMMQ…YIHI), 105 to 125 (WMSG…GYVL), and 170 to 190 (FFAL…LHII). 2 residues coordinate heme b: histidine 75 and histidine 89. Residues histidine 174 and histidine 188 each coordinate heme b. Histidine 193 contributes to the a ubiquinone binding site. Helical transmembrane passes span 218-238 (HKDL…VSFS), 280-300 (LGGA…PFTH), 312-332 (LSQL…WAAT), and 339-358 (FIII…LSIP).

The protein belongs to the cytochrome b family. As to quaternary structure, the cytochrome bc1 complex contains 3 respiratory subunits (MT-CYB, CYC1 and UQCRFS1), 2 core proteins (UQCRC1 and UQCRC2) and probably 6 low-molecular weight proteins. It depends on heme b as a cofactor.

The protein resides in the mitochondrion inner membrane. Component of the ubiquinol-cytochrome c reductase complex (complex III or cytochrome b-c1 complex) that is part of the mitochondrial respiratory chain. The b-c1 complex mediates electron transfer from ubiquinol to cytochrome c. Contributes to the generation of a proton gradient across the mitochondrial membrane that is then used for ATP synthesis. The chain is Cytochrome b (MT-CYB) from Antaresia childreni (Children's python).